The sequence spans 196 residues: Small ribosomal subunit protein uS5 (196 aa).

The S5 DRBM domain occupies 17-80 (FEEKMLFVNR…AVARKNMITV (64 aa)). The disordered stretch occupies residues 164–196 (GTEVRPSLSSDSPAGRSATTEAGEGVADTGGMQ). The segment covering 170–183 (SLSSDSPAGRSATT) has biased composition (polar residues).

Belongs to the universal ribosomal protein uS5 family. In terms of assembly, part of the 30S ribosomal subunit. Contacts proteins S4 and S8.

With S4 and S12 plays an important role in translational accuracy. In terms of biological role, located at the back of the 30S subunit body where it stabilizes the conformation of the head with respect to the body. The polypeptide is Small ribosomal subunit protein uS5 (Deinococcus radiodurans (strain ATCC 13939 / DSM 20539 / JCM 16871 / CCUG 27074 / LMG 4051 / NBRC 15346 / NCIMB 9279 / VKM B-1422 / R1)).